The following is an 88-amino-acid chain: Small ribosomal subunit protein uS17 (88 aa).

This sequence belongs to the universal ribosomal protein uS17 family. Part of the 30S ribosomal subunit.

One of the primary rRNA binding proteins, it binds specifically to the 5'-end of 16S ribosomal RNA. This Synechococcus sp. (strain CC9311) protein is Small ribosomal subunit protein uS17.